Consider the following 134-residue polypeptide: MRLYKAMALCLPLVVICTSEVSQSTAETMKSKAQDSYKRVVEHGKTCLERMCGLLSRGKGMLYTRVKNIVSSIRRGGEKNEEVAGPVDGEGSEEEAFDLSPEDIEKLIEEIKKKLAGYMDVTGEQNEEEEKKEL.

The N-terminal stretch at Met-1–Ala-26 is a signal peptide. The disordered stretch occupies residues Gly-77–Asp-98.

This is an uncharacterized protein from Encephalitozoon cuniculi (strain GB-M1) (Microsporidian parasite).